A 366-amino-acid chain; its full sequence is Inhibin alpha chain (366 aa).

Positions 1 to 20 are cleaved as a signal peptide; sequence MVIQPSLLLLLLLTLQDVDS. A propeptide spanning residues 21–63 is cleaved from the precursor; the sequence is CQGPELVRELVLAKVKALFLDALGPPAMDGEGGGPGIRRLPRR. The propeptide at 64–233 is inhibin alpha N-terminal region; that stretch reads HALGGFMHRT…APSAGERARR (170 aa). N-linked (GlcNAc...) asparagine glycosylation is found at Asn147 and Asn269. 3 cysteine pairs are disulfide-bonded: Cys263–Cys328, Cys292–Cys363, and Cys296–Cys365.

It belongs to the TGF-beta family. In terms of assembly, dimeric, linked by one or more disulfide bonds. Activin B is a dimer of alpha and beta-B. Inhibin A is a dimer of alpha and beta-A. Inhibin B is a dimer of alpha and beta-B. Interacts with TGFBR3L; this interaction regulates female fertility. Post-translationally, proteolytic processing yields a number of bioactive forms, consisting either solely of the mature alpha chain, of the most N-terminal propeptide linked through a disulfide bond to the mature alpha chain, or of the entire proprotein. Mainly expressed in ovary and testis. Alpha- and beta-B-subunits are the predominant forms found in testis. Also found in placenta, pituitary, adrenal gland, bone marrow, kidney, spinal cord and brain.

The protein localises to the secreted. Its function is as follows. Inhibins and activins inhibit and activate, respectively, the secretion of follitropin by the pituitary gland. Inhibins/activins are involved in regulating a number of diverse functions such as hypothalamic and pituitary hormone secretion, gonadal hormone secretion, germ cell development and maturation, erythroid differentiation, insulin secretion, nerve cell survival, embryonic axial development or bone growth, depending on their subunit composition. Inhibins appear to oppose the functions of activins. Functionally, inhibin A is a dimer of alpha/INHA and beta-A/INHBA that functions as a feedback regulator in the hypothalamic-pituitary-gonadal (HPG) axis. Inhibits the secretion of FSH from the anterior pituitary gland by acting on pituitary gonadotrope cells. Antagonizes activin A by binding to the proteoglycan, betaglycan, and forming a stable complex with and, thereby, sequestering type II activin receptors while excluding type I receptor. In terms of biological role, inhibin B is a dimer of alpha and beta-B that plays a crucial role in the regulation of the reproductive system by inhibiting the secretion of follicle-stimulating hormone (FSH) from the anterior pituitary gland. Thereby, maintains reproductive homeostasis in both males and females. Acts as a more potent suppressor of FSH release than inhibin A. Functions as competitive receptor antagonist binding activin type II receptors with high affinity in the presence of the TGF-beta type III coreceptor/TGFBR3L. This chain is Inhibin alpha chain (Inha), found in Rattus norvegicus (Rat).